The sequence spans 567 residues: Proline--tRNA ligase (567 aa).

The protein belongs to the class-II aminoacyl-tRNA synthetase family. ProS type 1 subfamily. As to quaternary structure, homodimer.

It is found in the cytoplasm. It carries out the reaction tRNA(Pro) + L-proline + ATP = L-prolyl-tRNA(Pro) + AMP + diphosphate. In terms of biological role, catalyzes the attachment of proline to tRNA(Pro) in a two-step reaction: proline is first activated by ATP to form Pro-AMP and then transferred to the acceptor end of tRNA(Pro). As ProRS can inadvertently accommodate and process non-cognate amino acids such as alanine and cysteine, to avoid such errors it has two additional distinct editing activities against alanine. One activity is designated as 'pretransfer' editing and involves the tRNA(Pro)-independent hydrolysis of activated Ala-AMP. The other activity is designated 'posttransfer' editing and involves deacylation of mischarged Ala-tRNA(Pro). The misacylated Cys-tRNA(Pro) is not edited by ProRS. In Stenotrophomonas maltophilia (strain R551-3), this protein is Proline--tRNA ligase.